A 346-amino-acid polypeptide reads, in one-letter code: Glycosyltransferase 1 domain-containing protein 1 (346 aa).

The signal sequence occupies residues 1 to 16 (MRLLFLAVLRPHTGNA).

This sequence belongs to the glycosyltransferase group 1 family. Glycosyltransferase 4 subfamily.

Its subcellular location is the secreted. In Homo sapiens (Human), this protein is Glycosyltransferase 1 domain-containing protein 1 (GLT1D1).